Consider the following 169-residue polypeptide: MQSLISFAHSRLSWGILALSALALESAALYFQHIMKLDPCVMCIYQRVAVFGLLGAGLFGFMAPANRVIRALGALLWGISAAWGLKLALELVDMQNNPNPFSTCSFLPEFPSWLQLHEWLPSVFMPTGMCTDIPWEFAGVTMGEWMIVAFSVYLLAWLAFIVPMLKKSA.

Residues 1-13 (MQSLISFAHSRLS) lie on the Cytoplasmic side of the membrane. Residues 14–30 (WGILALSALALESAALY) form a helical membrane-spanning segment. Residues 31–48 (FQHIMKLDPCVMCIYQRV) lie on the Periplasmic side of the membrane. Cysteines 40 and 43 form a disulfide. A helical membrane pass occupies residues 49 to 64 (AVFGLLGAGLFGFMAP). The Cytoplasmic segment spans residues 65 to 71 (ANRVIRA). Residues 72 to 89 (LGALLWGISAAWGLKLAL) form a helical membrane-spanning segment. At 90-144 (ELVDMQNNPNPFSTCSFLPEFPSWLQLHEWLPSVFMPTGMCTDIPWEFAGVTMGE) the chain is on the periplasmic side. A disulfide bridge connects residues Cys-104 and Cys-130. A helical transmembrane segment spans residues 145-163 (WMIVAFSVYLLAWLAFIVP). Topologically, residues 164–169 (MLKKSA) are cytoplasmic.

Belongs to the DsbB family.

The protein resides in the cell inner membrane. Functionally, required for disulfide bond formation in some periplasmic proteins. Acts by oxidizing the DsbA protein. This chain is Disulfide bond formation protein B, found in Shewanella amazonensis (strain ATCC BAA-1098 / SB2B).